The following is a 558-amino-acid chain: Dihydroxy-acid dehydratase (558 aa).

[2Fe-2S] cluster is bound at residue C50. Position 82 (D82) interacts with Mg(2+). A [2Fe-2S] cluster-binding site is contributed by C123. Residues D124 and K125 each contribute to the Mg(2+) site. K125 bears the N6-carboxylysine mark. Residue C195 coordinates [2Fe-2S] cluster. E447 lines the Mg(2+) pocket. S472 serves as the catalytic Proton acceptor.

This sequence belongs to the IlvD/Edd family. As to quaternary structure, homodimer. [2Fe-2S] cluster is required as a cofactor. Requires Mg(2+) as cofactor.

The enzyme catalyses (2R)-2,3-dihydroxy-3-methylbutanoate = 3-methyl-2-oxobutanoate + H2O. It catalyses the reaction (2R,3R)-2,3-dihydroxy-3-methylpentanoate = (S)-3-methyl-2-oxopentanoate + H2O. The protein operates within amino-acid biosynthesis; L-isoleucine biosynthesis; L-isoleucine from 2-oxobutanoate: step 3/4. Its pathway is amino-acid biosynthesis; L-valine biosynthesis; L-valine from pyruvate: step 3/4. Its function is as follows. Functions in the biosynthesis of branched-chain amino acids. Catalyzes the dehydration of (2R,3R)-2,3-dihydroxy-3-methylpentanoate (2,3-dihydroxy-3-methylvalerate) into 2-oxo-3-methylpentanoate (2-oxo-3-methylvalerate) and of (2R)-2,3-dihydroxy-3-methylbutanoate (2,3-dihydroxyisovalerate) into 2-oxo-3-methylbutanoate (2-oxoisovalerate), the penultimate precursor to L-isoleucine and L-valine, respectively. The polypeptide is Dihydroxy-acid dehydratase (Saccharolobus islandicus (strain M.16.27) (Sulfolobus islandicus)).